The sequence spans 498 residues: Acetylcholine receptor subunit alpha-type acr-16 (498 aa).

The first 19 residues, 1–19 (MSVCTLLISCAILAAPTLG), serve as a signal peptide directing secretion. Topologically, residues 20–230 (SLQERRLYED…FYLHMRRRTL (211 aa)) are extracellular. N-linked (GlcNAc...) asparagine glycans are attached at residues Asn-43 and Asn-93. Cystine bridges form between Cys-147-Cys-161 and Cys-211-Cys-212. The next 3 helical transmembrane spans lie at 231-252 (YYGFNLIMPCILTTLMTLLGFT), 261-279 (ITLQITVLLSICFFLSIVS), and 295-314 (FFTCCMIVVTASTVFTVYVL). The Cytoplasmic portion of the chain corresponds to 315-472 (NLHYRTPETH…WKFAAMVVDR (158 aa)). The helical transmembrane segment at 473–493 (LCLYVFTIFIIVSTIGIFWSA) threads the bilayer.

The protein belongs to the ligand-gated ion channel (TC 1.A.9) family. Acetylcholine receptor (TC 1.A.9.1) subfamily. In terms of tissue distribution, expressed in the body wall muscle.

The protein resides in the postsynaptic cell membrane. It is found in the cell membrane. In terms of biological role, after binding acetylcholine, the AChR responds by an extensive change in conformation that affects all subunits and leads to opening of an ion-conducting channel across the plasma membrane. A subunit of the levamisole-insensitive nicotinic receptor. In Caenorhabditis elegans, this protein is Acetylcholine receptor subunit alpha-type acr-16 (acr-16).